We begin with the raw amino-acid sequence, 287 residues long: ATP synthase gamma chain (287 aa).

This sequence belongs to the ATPase gamma chain family. In terms of assembly, F-type ATPases have 2 components, CF(1) - the catalytic core - and CF(0) - the membrane proton channel. CF(1) has five subunits: alpha(3), beta(3), gamma(1), delta(1), epsilon(1). CF(0) has three main subunits: a, b and c.

The protein localises to the cell inner membrane. Functionally, produces ATP from ADP in the presence of a proton gradient across the membrane. The gamma chain is believed to be important in regulating ATPase activity and the flow of protons through the CF(0) complex. The polypeptide is ATP synthase gamma chain (Edwardsiella ictaluri (strain 93-146)).